We begin with the raw amino-acid sequence, 452 residues long: Sesamin methylene transferase (452 aa).

This sequence belongs to the GcvT family. In terms of assembly, homotrimer.

It carries out the reaction (+)-sesamin + (6S)-5,6,7,8-tetrahydrofolyl-(gamma-L-Glu)(n) = (+)-sesamin monocatechol + (6R)-5,10-methylenetetrahydrofolyl-(gamma-L-Glu)(n). The enzyme catalyses (+)-sesamin monocatechol + (6S)-5,6,7,8-tetrahydrofolyl-(gamma-L-Glu)(n) = (+)-sesamin dicatechol + (6R)-5,10-methylenetetrahydrofolyl-(gamma-L-Glu)(n). In terms of biological role, converts sesamin into sesamin mono- and di-catechol. Catalyzes a ring cleavage to transfer the methylene group to tetrahydrofolate (THF). Also active with (+)-episesamin, (-)-asarinin, sesaminol, (+)-sesamolin and piperine. This Sinomonas sp. (strain No.22) protein is Sesamin methylene transferase.